The following is a 627-amino-acid chain: Probable inactive L-type lectin-domain containing receptor kinase III.1 (627 aa).

The signal sequence occupies residues 1–23 (MITFKSIALTIIFLSYFVSCVSS). The Extracellular portion of the chain corresponds to 24 to 303 (QRETKFLNHG…STEKKSNNTM (280 aa)). Positions 26-262 (ETKFLNHGFL…SHFVLGWSFN (237 aa)) are legume-lectin like. N-linked (GlcNAc...) asparagine glycans are attached at residues asparagine 57, asparagine 78, asparagine 127, asparagine 184, asparagine 202, asparagine 209, and asparagine 230. The segment at 272–297 (ITKLPSLPDPPPTLSPSPSPPVSTEK) is disordered. Over residues 278–292 (LPDPPPTLSPSPSPP) the composition is skewed to pro residues. Asparagine 300 carries N-linked (GlcNAc...) asparagine glycosylation. A helical membrane pass occupies residues 304-324 (LIIIVAASATVALMILIFSGF). Residues 325–627 (WFLRRDKIFF…PHDDYLFYGV (303 aa)) are Cytoplasmic-facing. One can recognise a Protein kinase domain in the interval 353 to 623 (FDNSKLLGER…TEALPHDDYL (271 aa)). ATP-binding positions include 359–367 (LGERNSGSF) and lysine 381.

This sequence in the C-terminal section; belongs to the protein kinase superfamily. Ser/Thr protein kinase family. It in the N-terminal section; belongs to the leguminous lectin family.

It localises to the cell membrane. This is Probable inactive L-type lectin-domain containing receptor kinase III.1 (LECRK31) from Arabidopsis thaliana (Mouse-ear cress).